The sequence spans 360 residues: Alpha-methylacyl-CoA racemase (360 aa).

Substrate is bound by residues Arg38, 59–62 (ADLK), 83–85 (GYR), Arg91, and 125–130 (GHDINY). His126 (proton acceptor) is an active-site residue. The Proton donor role is filled by Asp156.

The protein belongs to the CoA-transferase III family. As to quaternary structure, homodimer.

It carries out the reaction a (2S)-2-methylacyl-CoA = a (2R)-2-methylacyl-CoA. The enzyme catalyses (2S)-2-methyltetradecanoyl-CoA = (2R)-2-methyltetradecanoyl-CoA. The catalysed reaction is (2R)-pristanoyl-CoA = (2S)-pristanoyl-CoA. It catalyses the reaction (25S)-3-oxocholest-4-en-26-oyl-CoA = (25R)-3-oxocholest-4-en-26-oyl-CoA. It carries out the reaction (2S)-ibuprofenoyl-CoA = (2R)-ibuprofenoyl-CoA. Its activity is regulated as follows. Inactivated by N,N-dialkylcarbamoyl-CoA substrate-product analogs. In terms of biological role, catalyzes the epimerization of (2R)- and (2S)-methylacyl-coenzyme A (CoA) thioesters. Accepts as substrates a wide range of alpha-methylacyl-CoAs, including (2R)-2-methylmyristoyl-CoA and (2S)-2-methylmyristoyl-CoA, (2R)-pristanoyl-CoA and (2S)-pristanoyl-CoA, and the cholesterol esters (25R)-3-oxo-cholest-4-en-26-oyl-CoA and (25S)-3-oxo-cholest-4-en-26-oyl-CoA. Can also catalyze the interconversion of the non-physiologic substrates (2R)-ibuprofenoyl-CoA and (2S)-ibuprofenoyl-CoA, which are potential competitive inhibitors of the enzyme. The sequence is that of Alpha-methylacyl-CoA racemase from Mycobacterium tuberculosis (strain ATCC 25618 / H37Rv).